Consider the following 401-residue polypeptide: MNYDRILIRYGEMTTKGKNRNIFVRRLKNNIARKLQAFERIQIEYMRDRMYILLNGEPHEPIIEKLKTVFGIHSFSLAMKCENDLDAIKETALAAVRQLPYKGKTFKVSARRVDKQFPYRSDELNYEVGAHILRQTDGLRVNVREPDIDVRIEVRQDGTYVTCRDIFGAGGLPVGTSGKAMLMLSGGIDSPVAGYLAMKRGLEIEAVHFFSPPFTSERAKQKVIDLVRKLTTYGGRIKLHIVPFTEVQQAIYQGVPNEYSLISTRRAMLRITDALRRRQRALAIVTGESLGQVASQTLESMYVINEVTNTPILRPLVSMDKLEIIELAKQIGTHDISILPYEDCCTIFTPRAPKTKPKKEKVFHYESQLDLAPLLEKAVNDTETLVIDEETGQGDEFAELF.

One can recognise a THUMP domain in the interval 60 to 165; the sequence is EPIIEKLKTV…QDGTYVTCRD (106 aa). ATP-binding positions include 183–184, 208–209, Arg265, Gly287, and Gln296; these read ML and HF.

It belongs to the ThiI family.

It localises to the cytoplasm. The enzyme catalyses [ThiI sulfur-carrier protein]-S-sulfanyl-L-cysteine + a uridine in tRNA + 2 reduced [2Fe-2S]-[ferredoxin] + ATP + H(+) = [ThiI sulfur-carrier protein]-L-cysteine + a 4-thiouridine in tRNA + 2 oxidized [2Fe-2S]-[ferredoxin] + AMP + diphosphate. It catalyses the reaction [ThiS sulfur-carrier protein]-C-terminal Gly-Gly-AMP + S-sulfanyl-L-cysteinyl-[cysteine desulfurase] + AH2 = [ThiS sulfur-carrier protein]-C-terminal-Gly-aminoethanethioate + L-cysteinyl-[cysteine desulfurase] + A + AMP + 2 H(+). It functions in the pathway cofactor biosynthesis; thiamine diphosphate biosynthesis. In terms of biological role, catalyzes the ATP-dependent transfer of a sulfur to tRNA to produce 4-thiouridine in position 8 of tRNAs, which functions as a near-UV photosensor. Also catalyzes the transfer of sulfur to the sulfur carrier protein ThiS, forming ThiS-thiocarboxylate. This is a step in the synthesis of thiazole, in the thiamine biosynthesis pathway. The sulfur is donated as persulfide by IscS. The sequence is that of Probable tRNA sulfurtransferase from Geobacillus kaustophilus (strain HTA426).